The sequence spans 258 residues: Phosphate import ATP-binding protein PstB (258 aa).

The ABC transporter domain occupies 5 to 247 (IETKDLDIYY…ERIFSNPKEK (243 aa)). Residue 37 to 44 (GPSGCGKS) coordinates ATP.

It belongs to the ABC transporter superfamily. Phosphate importer (TC 3.A.1.7) family. As to quaternary structure, the complex is composed of two ATP-binding proteins (PstB), two transmembrane proteins (PstC and PstA) and a solute-binding protein (PstS).

Its subcellular location is the cell membrane. It carries out the reaction phosphate(out) + ATP + H2O = ADP + 2 phosphate(in) + H(+). Its function is as follows. Part of the ABC transporter complex PstSACB involved in phosphate import. Responsible for energy coupling to the transport system. The sequence is that of Phosphate import ATP-binding protein PstB from Cutibacterium acnes (strain DSM 16379 / KPA171202) (Propionibacterium acnes).